We begin with the raw amino-acid sequence, 355 residues long: MLALGLMSGTSLDGVDVALLETDGETVARFGPATTVPYGDEQRIALMGVLGGKGPVEQVERDFTLFHAQVVRDFLAAQGIDAATVGVAGFHGHTILHAPAERRTWQIGDGALLASEIGIPVVNDFRSADVAAGGQGAPLVPVYHRALAAGLEAPLAILNLGGVGNVTWISDDGSLLAFDTGPGNALLDDWALAHTGRPVDVDGRLAAAGKVRRDAVEAFLHHTYFDCQPPKSVDRDEFHALAWELVKGCSAEDGAATLTAFTAAAVALAAYSFPRPVKRWLVTGGGRRNPEMMTALSRGLSAPVEPVEAVGWNGDALEAQAFAFLAVRSLAGKMLTYPETTGAPAPQTGGRHHVP.

Position 9–16 (9–16 (GTSLDGVD)) interacts with ATP.

It belongs to the anhydro-N-acetylmuramic acid kinase family.

It catalyses the reaction 1,6-anhydro-N-acetyl-beta-muramate + ATP + H2O = N-acetyl-D-muramate 6-phosphate + ADP + H(+). It participates in amino-sugar metabolism; 1,6-anhydro-N-acetylmuramate degradation. Its pathway is cell wall biogenesis; peptidoglycan recycling. In terms of biological role, catalyzes the specific phosphorylation of 1,6-anhydro-N-acetylmuramic acid (anhMurNAc) with the simultaneous cleavage of the 1,6-anhydro ring, generating MurNAc-6-P. Is required for the utilization of anhMurNAc either imported from the medium or derived from its own cell wall murein, and thus plays a role in cell wall recycling. The sequence is that of Anhydro-N-acetylmuramic acid kinase from Paramagnetospirillum magneticum (strain ATCC 700264 / AMB-1) (Magnetospirillum magneticum).